Here is a 594-residue protein sequence, read N- to C-terminus: Aspartate--tRNA(Asp/Asn) ligase (594 aa).

An L-aspartate-binding site is contributed by Glu175. An aspartate region spans residues 199–202 (QQFK). Residues Arg221 and His455 each contribute to the L-aspartate site. Position 221–223 (221–223 (RDE)) interacts with ATP. Glu489 is an ATP binding site. Arg496 lines the L-aspartate pocket. An ATP-binding site is contributed by 541 to 544 (GIDR).

The protein belongs to the class-II aminoacyl-tRNA synthetase family. Type 1 subfamily. In terms of assembly, homodimer.

The protein resides in the cytoplasm. It catalyses the reaction tRNA(Asx) + L-aspartate + ATP = L-aspartyl-tRNA(Asx) + AMP + diphosphate. Aspartyl-tRNA synthetase with relaxed tRNA specificity since it is able to aspartylate not only its cognate tRNA(Asp) but also tRNA(Asn). Reaction proceeds in two steps: L-aspartate is first activated by ATP to form Asp-AMP and then transferred to the acceptor end of tRNA(Asp/Asn). This chain is Aspartate--tRNA(Asp/Asn) ligase, found in Pelagibacter ubique (strain HTCC1062).